Here is a 173-residue protein sequence, read N- to C-terminus: Lipoprotein signal peptidase (173 aa).

Transmembrane regions (helical) follow at residues 12–32 (WLWLAAIMLALDQVTKYWTIQ), 67–87 (WQRYLFTAIAIVVSSYLVYLL), and 102–122 (ALILSGALGNVVDRMMFGYVI). Active-site residues include aspartate 123 and aspartate 141. A helical membrane pass occupies residues 137-157 (FNIADSAIFTGAVIMIFESFF).

The protein belongs to the peptidase A8 family.

The protein resides in the cell inner membrane. The catalysed reaction is Release of signal peptides from bacterial membrane prolipoproteins. Hydrolyzes -Xaa-Yaa-Zaa-|-(S,diacylglyceryl)Cys-, in which Xaa is hydrophobic (preferably Leu), and Yaa (Ala or Ser) and Zaa (Gly or Ala) have small, neutral side chains.. The protein operates within protein modification; lipoprotein biosynthesis (signal peptide cleavage). Functionally, this protein specifically catalyzes the removal of signal peptides from prolipoproteins. The protein is Lipoprotein signal peptidase of Psychromonas ingrahamii (strain DSM 17664 / CCUG 51855 / 37).